Here is a 557-residue protein sequence, read N- to C-terminus: Urocanate hydratase (557 aa).

NAD(+) contacts are provided by residues 53 to 54 (GG), Q131, 177 to 179 (GMG), E197, 243 to 244 (NA), 264 to 268 (QTSAH), 274 to 275 (YL), and Y323. Residue C411 is part of the active site. An NAD(+)-binding site is contributed by G493.

It belongs to the urocanase family. It depends on NAD(+) as a cofactor.

Its subcellular location is the cytoplasm. It carries out the reaction 4-imidazolone-5-propanoate = trans-urocanate + H2O. The protein operates within amino-acid degradation; L-histidine degradation into L-glutamate; N-formimidoyl-L-glutamate from L-histidine: step 2/3. Catalyzes the conversion of urocanate to 4-imidazolone-5-propionate. The polypeptide is Urocanate hydratase (Mesorhizobium japonicum (strain LMG 29417 / CECT 9101 / MAFF 303099) (Mesorhizobium loti (strain MAFF 303099))).